Here is a 326-residue protein sequence, read N- to C-terminus: Peroxidase 1 (326 aa).

The N-terminal stretch at 1–22 is a signal peptide; the sequence is MASSRVILALLLAAAAVMASSA. At glutamine 23 the chain carries Pyrrolidone carboxylic acid. Cystine bridges form between cysteine 33-cysteine 112, cysteine 66-cysteine 71, cysteine 118-cysteine 322, and cysteine 196-cysteine 231. The active-site Proton acceptor is the histidine 64. Residues aspartate 65, valine 68, glycine 70, aspartate 72, and serine 74 each coordinate Ca(2+). N-linked (GlcNAc...) asparagine glycans are attached at residues asparagine 82 and asparagine 153. Proline 159 serves as a coordination point for substrate. Asparagine 164 carries N-linked (GlcNAc...) asparagine glycosylation. Histidine 189 provides a ligand contact to heme b. Residue threonine 190 participates in Ca(2+) binding. N-linked (GlcNAc...) asparagine glycosylation is found at asparagine 205 and asparagine 237. 3 residues coordinate Ca(2+): aspartate 244, serine 247, and aspartate 252.

This sequence belongs to the peroxidase family. Classical plant (class III) peroxidase subfamily. It depends on Ca(2+) as a cofactor. Heme b serves as cofactor.

Its subcellular location is the secreted. It catalyses the reaction 2 a phenolic donor + H2O2 = 2 a phenolic radical donor + 2 H2O. Functionally, removal of H(2)O(2), oxidation of toxic reductants, biosynthesis and degradation of lignin, suberization, auxin catabolism, response to environmental stresses such as wounding, pathogen attack and oxidative stress. These functions might be dependent on each isozyme/isoform in each plant tissue. The polypeptide is Peroxidase 1 (PRX74) (Oryza sativa subsp. japonica (Rice)).